Here is a 1078-residue protein sequence, read N- to C-terminus: Teashirt homolog 1-A (1078 aa).

Disordered stretches follow at residues Met1–Tyr110, Lys140–Ala197, and Gly271–Glu300. The span at Ile26 to Leu36 shows a compositional bias: acidic residues. Over residues Pro57–Asp71 the composition is skewed to polar residues. Residues Glu143–Ala197 show a composition bias toward low complexity. 2 consecutive C2H2-type zinc fingers follow at residues Phe248 to His272 and Leu309 to His333. The segment covering Gly271 to Lys286 has biased composition (basic and acidic residues). The segment at Asp365–Pro394 is disordered. The segment at Leu418–His442 adopts a C2H2-type 3 zinc-finger fold. Disordered regions lie at residues Leu472–Asp524 and Arg850–Asp877. Residues His497–Asp524 are compositionally biased toward basic and acidic residues. A compositionally biased stretch (polar residues) spans Pro853–Ser862. Positions Arg885–Gly955 form a DNA-binding region, homeobox. C2H2-type zinc fingers lie at residues Phe970–His992 and Phe1038–His1061.

This sequence belongs to the teashirt C2H2-type zinc-finger protein family.

It localises to the nucleus. Its function is as follows. Probable transcriptional regulator involved in developmental processes. May act as a transcriptional repressor (Potential). Involved in two major neuronal regionalization processes: primary anteroposterior (AP) axis patterning of the CNS and segmentation of the cranial neuronal crest (CNS) development. This Xenopus laevis (African clawed frog) protein is Teashirt homolog 1-A (tshz1-a).